Consider the following 911-residue polypeptide: Protein translocase subunit SecA (911 aa).

ATP-binding positions include Gln86, Gly104–Thr108, and Asp512. The tract at residues Ala869–Lys888 is disordered. Zn(2+)-binding residues include Cys895, Cys897, Cys906, and His907.

This sequence belongs to the SecA family. Monomer and homodimer. Part of the essential Sec protein translocation apparatus which comprises SecA, SecYEG and auxiliary proteins SecDF-YajC and YidC. It depends on Zn(2+) as a cofactor.

The protein localises to the cell inner membrane. Its subcellular location is the cytoplasm. The catalysed reaction is ATP + H2O + cellular proteinSide 1 = ADP + phosphate + cellular proteinSide 2.. Functionally, part of the Sec protein translocase complex. Interacts with the SecYEG preprotein conducting channel. Has a central role in coupling the hydrolysis of ATP to the transfer of proteins into and across the cell membrane, serving both as a receptor for the preprotein-SecB complex and as an ATP-driven molecular motor driving the stepwise translocation of polypeptide chains across the membrane. The protein is Protein translocase subunit SecA of Bordetella parapertussis (strain 12822 / ATCC BAA-587 / NCTC 13253).